The chain runs to 369 residues: Phosphoribosylformylglycinamidine cyclo-ligase (369 aa).

The interval 1–22 (MSKRDTSQPKTGQPKTSKRRNG) is disordered.

The protein belongs to the AIR synthase family.

It is found in the cytoplasm. The enzyme catalyses 2-formamido-N(1)-(5-O-phospho-beta-D-ribosyl)acetamidine + ATP = 5-amino-1-(5-phospho-beta-D-ribosyl)imidazole + ADP + phosphate + H(+). The protein operates within purine metabolism; IMP biosynthesis via de novo pathway; 5-amino-1-(5-phospho-D-ribosyl)imidazole from N(2)-formyl-N(1)-(5-phospho-D-ribosyl)glycinamide: step 2/2. In Mesorhizobium japonicum (strain LMG 29417 / CECT 9101 / MAFF 303099) (Mesorhizobium loti (strain MAFF 303099)), this protein is Phosphoribosylformylglycinamidine cyclo-ligase.